Reading from the N-terminus, the 461-residue chain is General transcription factor IIH subunit 2 (461 aa).

Residues 1 to 13 are compositionally biased toward polar residues; sequence MSKNIYNNNAQNK. Disordered stretches follow at residues 1-37 and 61-83; these read MSKN…DEDG and LRPS…DRDG. Positions 61–71 are enriched in basic and acidic residues; that stretch reads LRPSNQEERNT. A VWFA domain is found at 98–275; the sequence is HLCLILDLSK…ESLMLKCQPP (178 aa). The C4-type zinc finger occupies 315-332; it reads CPRCGVKSCELPTDCQIC. Positions 423 to 447 are enriched in low complexity; it reads TNGKTNGNEITNGNGNGNGNENENG. Positions 423 to 461 are disordered; that stretch reads TNGKTNGNEITNGNGNGNGNENENGNGNGNGNGNGNGLH. The interval 434–459 is 13 X 2 tandem repeat of N-[GE]; the sequence is NGNGNGNGNENENGNGNGNGNGNGNG. The segment covering 448–461 has biased composition (gly residues); it reads NGNGNGNGNGNGLH.

The protein belongs to the GTF2H2 family. In terms of assembly, component of the 7-subunit TFIIH core complex composed of XPB/repB, XPD/repD, gtf2h1, gtf2h2, gtf2h3, gtf2h4 and gtf2h5, which is active in NER. The core complex associates with the 3-subunit CDK-activating kinase (CAK) module composed of cycH/cyclin H, cdk7 and mnat1 to form the 10-subunit holoenzyme (holo-TFIIH) active in transcription.

The protein localises to the nucleus. Functionally, component of the general transcription and DNA repair factor IIH (TFIIH) core complex, which is involved in general and transcription-coupled nucleotide excision repair (NER) of damaged DNA and, when complexed to CAK, in RNA transcription by RNA polymerase II. In NER, TFIIH acts by opening DNA around the lesion to allow the excision of the damaged oligonucleotide and its replacement by a new DNA fragment. In transcription, TFIIH has an essential role in transcription initiation. When the pre-initiation complex (PIC) has been established, TFIIH is required for promoter opening and promoter escape. Phosphorylation of the C-terminal tail (CTD) of the largest subunit of RNA polymerase II by the kinase module CAK controls the initiation of transcription. The protein is General transcription factor IIH subunit 2 (gtf2h2) of Dictyostelium discoideum (Social amoeba).